Reading from the N-terminus, the 157-residue chain is 2-C-methyl-D-erythritol 2,4-cyclodiphosphate synthase (157 aa).

A divalent metal cation is bound by residues Asp8 and His10. 4-CDP-2-C-methyl-D-erythritol 2-phosphate is bound by residues Asp8–His10 and His34–Ser35. His42 lines the a divalent metal cation pocket. 4-CDP-2-C-methyl-D-erythritol 2-phosphate contacts are provided by residues Asp56–Gly58, Phe61–Asp65, Ala100–Ala106, Thr132–Glu135, Phe139, and Arg142.

Belongs to the IspF family. As to quaternary structure, homotrimer. A divalent metal cation serves as cofactor.

The catalysed reaction is 4-CDP-2-C-methyl-D-erythritol 2-phosphate = 2-C-methyl-D-erythritol 2,4-cyclic diphosphate + CMP. The protein operates within isoprenoid biosynthesis; isopentenyl diphosphate biosynthesis via DXP pathway; isopentenyl diphosphate from 1-deoxy-D-xylulose 5-phosphate: step 4/6. In terms of biological role, involved in the biosynthesis of isopentenyl diphosphate (IPP) and dimethylallyl diphosphate (DMAPP), two major building blocks of isoprenoid compounds. Catalyzes the conversion of 4-diphosphocytidyl-2-C-methyl-D-erythritol 2-phosphate (CDP-ME2P) to 2-C-methyl-D-erythritol 2,4-cyclodiphosphate (ME-CPP) with a corresponding release of cytidine 5-monophosphate (CMP). The polypeptide is 2-C-methyl-D-erythritol 2,4-cyclodiphosphate synthase (Geobacter sulfurreducens (strain ATCC 51573 / DSM 12127 / PCA)).